Here is a 436-residue protein sequence, read N- to C-terminus: GTPase Der (436 aa).

EngA-type G domains lie at Pro-3–Ser-168 and Ile-177–Ser-352. Residues Gly-9–Ser-16, Asp-56–Tyr-60, Asn-120–Glu-123, Gly-183–Ser-190, Asp-230–Leu-234, and Asn-295–Asp-298 each bind GTP. Residues Gln-353–Lys-436 form the KH-like domain.

This sequence belongs to the TRAFAC class TrmE-Era-EngA-EngB-Septin-like GTPase superfamily. EngA (Der) GTPase family. In terms of assembly, associates with the 50S ribosomal subunit.

GTPase that plays an essential role in the late steps of ribosome biogenesis. This chain is GTPase Der, found in Prosthecochloris aestuarii (strain DSM 271 / SK 413).